A 342-amino-acid chain; its full sequence is Protein pelota homolog (342 aa).

Belongs to the eukaryotic release factor 1 family. Pelota subfamily. As to quaternary structure, monomer. It depends on a divalent metal cation as a cofactor.

The protein resides in the cytoplasm. Its function is as follows. May function in recognizing stalled ribosomes, interact with stem-loop structures in stalled mRNA molecules, and effect endonucleolytic cleavage of the mRNA. May play a role in the release non-functional ribosomes and degradation of damaged mRNAs. Has endoribonuclease activity. This is Protein pelota homolog from Methanocorpusculum labreanum (strain ATCC 43576 / DSM 4855 / Z).